Here is a 69-residue protein sequence, read N- to C-terminus: Cytochrome c oxidase subunit 8A, mitochondrial (69 aa).

Residues 1–25 (MSVLTSLLLRGLTGSARWLPVPRAK) constitute a mitochondrion transit peptide. Positions 2–19 (SVLTSLLLRGLTGSARWL) match the SIFI-degron motif. Residues 26 to 36 (VHSMPPEVELG) lie on the Mitochondrial matrix side of the membrane. A helical membrane pass occupies residues 37–60 (IMEKAIGLTSCFVSLFLPAGWILS). Residues 61 to 69 (HLEDYKRPE) lie on the Mitochondrial intermembrane side of the membrane.

It belongs to the cytochrome c oxidase VIII family. Component of the cytochrome c oxidase (complex IV, CIV), a multisubunit enzyme composed of 14 subunits. The complex is composed of a catalytic core of 3 subunits MT-CO1, MT-CO2 and MT-CO3, encoded in the mitochondrial DNA, and 11 supernumerary subunits COX4I, COX5A, COX5B, COX6A, COX6B, COX6C, COX7A, COX7B, COX7C, COX8 and NDUFA4, which are encoded in the nuclear genome. The complex exists as a monomer or a dimer and forms supercomplexes (SCs) in the inner mitochondrial membrane with NADH-ubiquinone oxidoreductase (complex I, CI) and ubiquinol-cytochrome c oxidoreductase (cytochrome b-c1 complex, complex III, CIII), resulting in different assemblies (supercomplex SCI(1)III(2)IV(1) and megacomplex MCI(2)III(2)IV(2)). In terms of processing, in response to mitochondrial stress, the precursor protein is ubiquitinated by the SIFI complex in the cytoplasm before mitochondrial import, leading to its degradation. Within the SIFI complex, UBR4 initiates ubiquitin chain that are further elongated or branched by KCMF1.

The protein localises to the mitochondrion inner membrane. It participates in energy metabolism; oxidative phosphorylation. Component of the cytochrome c oxidase, the last enzyme in the mitochondrial electron transport chain which drives oxidative phosphorylation. The respiratory chain contains 3 multisubunit complexes succinate dehydrogenase (complex II, CII), ubiquinol-cytochrome c oxidoreductase (cytochrome b-c1 complex, complex III, CIII) and cytochrome c oxidase (complex IV, CIV), that cooperate to transfer electrons derived from NADH and succinate to molecular oxygen, creating an electrochemical gradient over the inner membrane that drives transmembrane transport and the ATP synthase. Cytochrome c oxidase is the component of the respiratory chain that catalyzes the reduction of oxygen to water. Electrons originating from reduced cytochrome c in the intermembrane space (IMS) are transferred via the dinuclear copper A center (CU(A)) of subunit 2 and heme A of subunit 1 to the active site in subunit 1, a binuclear center (BNC) formed by heme A3 and copper B (CU(B)). The BNC reduces molecular oxygen to 2 water molecules using 4 electrons from cytochrome c in the IMS and 4 protons from the mitochondrial matrix. The protein is Cytochrome c oxidase subunit 8A, mitochondrial (COX8A) of Macaca silenus (Lion-tailed macaque).